The following is a 31-amino-acid chain: Cyclotide psybry B (31 aa).

The cyclopeptide (Gly-Asn) cross-link spans 1-31; sequence GFNPCGETCWNKPTCHAPGCTCSIANICVRN. 3 disulfide bridges follow: Cys-5/Cys-20, Cys-9/Cys-22, and Cys-15/Cys-28.

Post-translationally, this is a cyclic peptide.

In terms of biological role, probably participates in a plant defense mechanism. The chain is Cyclotide psybry B from Psychotria brachyceras.